A 585-amino-acid chain; its full sequence is RNA polymerase sigma factor RpoD (585 aa).

Residues 67 to 93 (PASTLVPKDDSKPARKKKESSASTSGS) form a disordered region. A sigma-70 factor domain-2 region spans residues 351 to 421 (LVKANLRLVV…TRAISDQART (71 aa)). An Interaction with polymerase core subunit RpoC motif is present at residues 375–378 (DLIQ). The tract at residues 430–506 (EQVNKVIRET…DTEVETPVNA (77 aa)) is sigma-70 factor domain-3. The interval 519-572 (VLHTLPAREQKVIRMRFGLDDGYPQTLEEVGYQFKVTRERIRQIEAKALRRLRH) is sigma-70 factor domain-4. Positions 545 to 564 (LEEVGYQFKVTRERIRQIEA) form a DNA-binding region, H-T-H motif.

This sequence belongs to the sigma-70 factor family. RpoD/SigA subfamily. In terms of assembly, interacts transiently with the RNA polymerase catalytic core.

The protein resides in the cytoplasm. Functionally, sigma factors are initiation factors that promote the attachment of RNA polymerase to specific initiation sites and are then released. This sigma factor is the primary sigma factor during exponential growth. The sequence is that of RNA polymerase sigma factor RpoD from Leptospira interrogans serogroup Icterohaemorrhagiae serovar copenhageni (strain Fiocruz L1-130).